We begin with the raw amino-acid sequence, 123 residues long: Small ribosomal subunit protein uS12 (123 aa).

The tract at residues 1 to 30 (MPTIQQLVRKGRQDKVEKNKTPALEGSPQR) is disordered. Basic and acidic residues predominate over residues 11–20 (GRQDKVEKNK). Position 89 is a 3-methylthioaspartic acid (Asp-89).

Belongs to the universal ribosomal protein uS12 family. Part of the 30S ribosomal subunit. Contacts proteins S8 and S17. May interact with IF1 in the 30S initiation complex.

In terms of biological role, with S4 and S5 plays an important role in translational accuracy. Its function is as follows. Interacts with and stabilizes bases of the 16S rRNA that are involved in tRNA selection in the A site and with the mRNA backbone. Located at the interface of the 30S and 50S subunits, it traverses the body of the 30S subunit contacting proteins on the other side and probably holding the rRNA structure together. The combined cluster of proteins S8, S12 and S17 appears to hold together the shoulder and platform of the 30S subunit. The polypeptide is Small ribosomal subunit protein uS12 (rpsL) (Streptomyces avermitilis (strain ATCC 31267 / DSM 46492 / JCM 5070 / NBRC 14893 / NCIMB 12804 / NRRL 8165 / MA-4680)).